The chain runs to 238 residues: NADH-quinone oxidoreductase subunit C (238 aa).

The interval 1-20 (MSSPDQNPSDAAGQTGSSNE) is disordered.

This sequence belongs to the complex I 30 kDa subunit family. In terms of assembly, NDH-1 is composed of 14 different subunits. Subunits NuoB, C, D, E, F, and G constitute the peripheral sector of the complex.

The protein resides in the cell membrane. The catalysed reaction is a quinone + NADH + 5 H(+)(in) = a quinol + NAD(+) + 4 H(+)(out). In terms of biological role, NDH-1 shuttles electrons from NADH, via FMN and iron-sulfur (Fe-S) centers, to quinones in the respiratory chain. The immediate electron acceptor for the enzyme in this species is believed to be a menaquinone. Couples the redox reaction to proton translocation (for every two electrons transferred, four hydrogen ions are translocated across the cytoplasmic membrane), and thus conserves the redox energy in a proton gradient. In Mycobacterium ulcerans (strain Agy99), this protein is NADH-quinone oxidoreductase subunit C.